Reading from the N-terminus, the 279-residue chain is Digeranylgeranylglyceryl phosphate synthase (279 aa).

Transmembrane regions (helical) follow at residues 27 to 47, 90 to 110, 127 to 147, 199 to 219, 222 to 242, and 259 to 279; these read LIATGTLTPPSLLLAVIVALI, FVGGIAIATLTTTLCLAIAII, VLGNVAVAYLAGSVFLFGGAF, TGIFAFACACGAVAASLLPFG, WGLFYLAGIAVVDLVILFGAF, and TSILRAGMFAALAVFAIAAVI.

Belongs to the UbiA prenyltransferase family. DGGGP synthase subfamily. The cofactor is Mg(2+).

The protein localises to the cell membrane. The catalysed reaction is sn-3-O-(geranylgeranyl)glycerol 1-phosphate + (2E,6E,10E)-geranylgeranyl diphosphate = 2,3-bis-O-(geranylgeranyl)-sn-glycerol 1-phosphate + diphosphate. It participates in membrane lipid metabolism; glycerophospholipid metabolism. Its function is as follows. Prenyltransferase that catalyzes the transfer of the geranylgeranyl moiety of geranylgeranyl diphosphate (GGPP) to the C2 hydroxyl of (S)-3-O-geranylgeranylglyceryl phosphate (GGGP). This reaction is the second ether-bond-formation step in the biosynthesis of archaeal membrane lipids. This chain is Digeranylgeranylglyceryl phosphate synthase, found in Methanoculleus marisnigri (strain ATCC 35101 / DSM 1498 / JR1).